The primary structure comprises 235 residues: Aspartate/glutamate leucyltransferase (235 aa).

Belongs to the R-transferase family. Bpt subfamily.

The protein localises to the cytoplasm. The catalysed reaction is N-terminal L-glutamyl-[protein] + L-leucyl-tRNA(Leu) = N-terminal L-leucyl-L-glutamyl-[protein] + tRNA(Leu) + H(+). It catalyses the reaction N-terminal L-aspartyl-[protein] + L-leucyl-tRNA(Leu) = N-terminal L-leucyl-L-aspartyl-[protein] + tRNA(Leu) + H(+). Its function is as follows. Functions in the N-end rule pathway of protein degradation where it conjugates Leu from its aminoacyl-tRNA to the N-termini of proteins containing an N-terminal aspartate or glutamate. The polypeptide is Aspartate/glutamate leucyltransferase (Pseudomonas aeruginosa (strain LESB58)).